Reading from the N-terminus, the 377-residue chain is Putative zinc metalloprotease Atu1380 (377 aa).

H29 is a Zn(2+) binding site. Residue E30 is part of the active site. H33 is a binding site for Zn(2+). Helical transmembrane passes span 118-140, 299-321, and 351-373; these read VAAG…FGIY, LGIS…LNLM, and VAFR…NDIS. One can recognise a PDZ domain in the interval 129-202; the sequence is AILIFAVLFG…TPITVTVERA (74 aa).

This sequence belongs to the peptidase M50B family. It depends on Zn(2+) as a cofactor.

It localises to the cell inner membrane. The chain is Putative zinc metalloprotease Atu1380 from Agrobacterium fabrum (strain C58 / ATCC 33970) (Agrobacterium tumefaciens (strain C58)).